We begin with the raw amino-acid sequence, 169 residues long: Proepiregulin (169 aa).

Residues 1-29 (MTAGRRMEMLCAGRVPALLLCLGFHLLQA) form the signal peptide. A propeptide spanning residues 30 to 62 (VLSTTVIPSCIPGESSDNCTALVQTEDNPRVAQ) is cleaved from the precursor. The N-linked (GlcNAc...) asparagine glycan is linked to Asn47. At 60-119 (VAQVSITKCSSDMNGYCLHGQCIYLVDMSQNYCRCEVGYTGVRCEHFFLTVHQPLSKEYV) the chain is on the extracellular side. One can recognise an EGF-like domain in the interval 64 to 104 (SITKCSSDMNGYCLHGQCIYLVDMSQNYCRCEVGYTGVRCE). Disulfide bonds link Cys68–Cys81, Cys76–Cys92, and Cys94–Cys103. Positions 109 to 169 (TVHQPLSKEY…TSGDPELPQV (61 aa)) are cleaved as a propeptide — removed in mature form. Residues 120-140 (ALTVILIILFLITVVGSTYYF) form a helical membrane-spanning segment. The Cytoplasmic segment spans residues 141 to 169 (CRWYRNRKSKEPKKEYERVTSGDPELPQV).

As to quaternary structure, interacts with EGFR and ERBB4. As to expression, in normal adults, expressed predominantly in the placenta and peripheral blood leukocytes. High levels were detected in carcinomas of the bladder, lung, kidney and colon.

It localises to the secreted. Its subcellular location is the extracellular space. It is found in the cell membrane. Functionally, ligand of the EGF receptor/EGFR and ERBB4. Stimulates EGFR and ERBB4 tyrosine phosphorylation. Contributes to inflammation, wound healing, tissue repair, and oocyte maturation by regulating angiogenesis and vascular remodeling and by stimulating cell proliferation. This is Proepiregulin (EREG) from Homo sapiens (Human).